Reading from the N-terminus, the 186-residue chain is uncharacterized protein (186 aa).

A signal peptide spans 1 to 21; that stretch reads MIHVKYIILGFIMVSSLNLYA.

This is an uncharacterized protein from Rickettsia conorii (strain ATCC VR-613 / Malish 7).